The following is a 177-amino-acid chain: Secretion monitor (177 aa).

The signal sequence occupies residues 1–30; it reads MIGILNRWRQFGRRYFWPHLLLGMVAASLG.

Belongs to the SecM family.

Its subcellular location is the cytoplasm. It localises to the cytosol. It is found in the periplasm. In terms of biological role, regulates secA expression by translational coupling of the secM secA operon. Translational pausing at a specific Pro residue 5 residues before the end of the protein may allow disruption of a mRNA repressor helix that normally suppresses secA translation initiation. The polypeptide is Secretion monitor (Yersinia enterocolitica serotype O:8 / biotype 1B (strain NCTC 13174 / 8081)).